The chain runs to 388 residues: 3-dehydroquinate synthase (388 aa).

NAD(+)-binding positions include 85-90 (DGEQYK), 119-123 (GVIGD), 143-144 (TT), lysine 156, lysine 165, and 183-186 (TLKT). Glutamate 198, histidine 261, and histidine 278 together coordinate Zn(2+).

The protein belongs to the sugar phosphate cyclases superfamily. Dehydroquinate synthase family. It depends on Co(2+) as a cofactor. Zn(2+) serves as cofactor. NAD(+) is required as a cofactor.

Its subcellular location is the cytoplasm. It catalyses the reaction 7-phospho-2-dehydro-3-deoxy-D-arabino-heptonate = 3-dehydroquinate + phosphate. It functions in the pathway metabolic intermediate biosynthesis; chorismate biosynthesis; chorismate from D-erythrose 4-phosphate and phosphoenolpyruvate: step 2/7. Its function is as follows. Catalyzes the conversion of 3-deoxy-D-arabino-heptulosonate 7-phosphate (DAHP) to dehydroquinate (DHQ). This Psychrobacter arcticus (strain DSM 17307 / VKM B-2377 / 273-4) protein is 3-dehydroquinate synthase.